The primary structure comprises 304 residues: tRNA pseudouridine synthase B (304 aa).

The active-site Nucleophile is Asp41.

It belongs to the pseudouridine synthase TruB family. Type 1 subfamily.

It carries out the reaction uridine(55) in tRNA = pseudouridine(55) in tRNA. Responsible for synthesis of pseudouridine from uracil-55 in the psi GC loop of transfer RNAs. The sequence is that of tRNA pseudouridine synthase B from Nitratidesulfovibrio vulgaris (strain ATCC 29579 / DSM 644 / CCUG 34227 / NCIMB 8303 / VKM B-1760 / Hildenborough) (Desulfovibrio vulgaris).